Reading from the N-terminus, the 171-residue chain is Adenine phosphoribosyltransferase (171 aa).

The protein belongs to the purine/pyrimidine phosphoribosyltransferase family. Homodimer.

Its subcellular location is the cytoplasm. The enzyme catalyses AMP + diphosphate = 5-phospho-alpha-D-ribose 1-diphosphate + adenine. The protein operates within purine metabolism; AMP biosynthesis via salvage pathway; AMP from adenine: step 1/1. Its function is as follows. Catalyzes a salvage reaction resulting in the formation of AMP, that is energically less costly than de novo synthesis. The sequence is that of Adenine phosphoribosyltransferase from Acidiphilium cryptum (strain JF-5).